Here is a 384-residue protein sequence, read N- to C-terminus: MQTGHPADGVYLGLMSGTSMDGVDGITVRFETGKPPAVLSEAFVGFADTLRDSLFALQQPGDDEIEREALAANALAARYAACCHEMLRAAGLSPDDVRALGVHGQTVRHRPERGYTRQINNAALLAELTRIDVIADFRSRDVAAGGQGAPLVPAFHATMFGSPDETRVVCNLGGISNITILPAARDGRDERNDAVRGHDCGPANALIDAWALRHLKRPFDEGGRFAARGTVDETLLAALLDEPYFRQSAPKSTGRDLFNADWLDAKLAGFRGLAPEDVQATLTALTAASVADEIARHAHDCRAVYVCGGGARNPVLLDALATALAARGLDAPVATTAALGVPPQQVESLAFAWLAYRFNARAPGNVSAVTGAAGERVLGALYPR.

17–24 (GTSMDGVD) is a binding site for ATP.

The protein belongs to the anhydro-N-acetylmuramic acid kinase family.

It carries out the reaction 1,6-anhydro-N-acetyl-beta-muramate + ATP + H2O = N-acetyl-D-muramate 6-phosphate + ADP + H(+). Its pathway is amino-sugar metabolism; 1,6-anhydro-N-acetylmuramate degradation. It participates in cell wall biogenesis; peptidoglycan recycling. Its function is as follows. Catalyzes the specific phosphorylation of 1,6-anhydro-N-acetylmuramic acid (anhMurNAc) with the simultaneous cleavage of the 1,6-anhydro ring, generating MurNAc-6-P. Is required for the utilization of anhMurNAc either imported from the medium or derived from its own cell wall murein, and thus plays a role in cell wall recycling. The protein is Anhydro-N-acetylmuramic acid kinase of Burkholderia thailandensis (strain ATCC 700388 / DSM 13276 / CCUG 48851 / CIP 106301 / E264).